The chain runs to 191 residues: GTP-dependent dephospho-CoA kinase (191 aa).

GTP is bound by residues Asp-46, Asp-65, Lys-67, and Glu-122.

Belongs to the GTP-dependent DPCK family.

The enzyme catalyses 3'-dephospho-CoA + GTP = GDP + CoA + H(+). Its pathway is cofactor biosynthesis; coenzyme A biosynthesis. Its function is as follows. Catalyzes the GTP-dependent phosphorylation of the 3'-hydroxyl group of dephosphocoenzyme A to form coenzyme A (CoA). This chain is GTP-dependent dephospho-CoA kinase, found in Methanopyrus kandleri (strain AV19 / DSM 6324 / JCM 9639 / NBRC 100938).